A 323-amino-acid polypeptide reads, in one-letter code: tRNA-dihydrouridine synthase B (323 aa).

FMN contacts are provided by residues 16–18 (PMA) and Q70. The Proton donor role is filled by C100. FMN contacts are provided by residues K139, 200-202 (NGD), and 224-225 (GR).

This sequence belongs to the Dus family. DusB subfamily. FMN serves as cofactor.

It carries out the reaction a 5,6-dihydrouridine in tRNA + NAD(+) = a uridine in tRNA + NADH + H(+). It catalyses the reaction a 5,6-dihydrouridine in tRNA + NADP(+) = a uridine in tRNA + NADPH + H(+). Its function is as follows. Catalyzes the synthesis of 5,6-dihydrouridine (D), a modified base found in the D-loop of most tRNAs, via the reduction of the C5-C6 double bond in target uridines. This Proteus vulgaris protein is tRNA-dihydrouridine synthase B.